Here is a 127-residue protein sequence, read N- to C-terminus: MMRQSVQTVLPESTGNNTLSLRDSVCRDLFQLFSSPHSPLPILLVSGMPEWQGHNQSDKLLQSWYCRQLRSALLFHEPRIAALQVNLKEAYCYELAISLEMMLYHDDEPLTFDLVWQKGSWHRTMPQ.

It belongs to the GpW/Gp25 family. IraD subfamily. Interacts with RssB.

Its subcellular location is the cytoplasm. In terms of biological role, inhibits RpoS proteolysis by regulating RssB activity, thereby increasing the stability of the sigma stress factor RpoS during oxidative stress. Its effect on RpoS stability is due to its interaction with RssB, which probably blocks the interaction of RssB with RpoS, and the consequent delivery of the RssB-RpoS complex to the ClpXP protein degradation pathway. The polypeptide is Anti-adapter protein IraD (Escherichia coli O6:K15:H31 (strain 536 / UPEC)).